The primary structure comprises 540 residues: Glucose-6-phosphate isomerase (540 aa).

Glu350 acts as the Proton donor in catalysis. Active-site residues include His381 and Lys503.

The protein belongs to the GPI family.

It localises to the cytoplasm. The enzyme catalyses alpha-D-glucose 6-phosphate = beta-D-fructose 6-phosphate. It functions in the pathway carbohydrate biosynthesis; gluconeogenesis. It participates in carbohydrate degradation; glycolysis; D-glyceraldehyde 3-phosphate and glycerone phosphate from D-glucose: step 2/4. Catalyzes the reversible isomerization of glucose-6-phosphate to fructose-6-phosphate. The polypeptide is Glucose-6-phosphate isomerase (Paraburkholderia xenovorans (strain LB400)).